A 314-amino-acid polypeptide reads, in one-letter code: Protein OPG185 (314 aa).

The signal sequence occupies residues 1–16 (MARLPILLLLISLVYS). The region spanning 17–121 (TPSPQTSKKI…NDTDKVDYEE (105 aa)) is the Ig-like V-type domain. Residues 17-278 (TPSPQTSKKI…SNYKTKDFVE (262 aa)) are Virion surface-facing. C34 and C103 are disulfide-bonded. N37, N38, N69, N112, and N161 each carry an N-linked (GlcNAc...) asparagine; by host glycan. Residues 192–217 (NTVSTTSRESTTDETPEPITDKEEDH) are disordered. N253 is a glycosylation site (N-linked (GlcNAc...) asparagine; by host). Residues 279-302 (IFGITALIILSAVAIFCITYYICN) form a helical membrane-spanning segment. Residues 303–314 (KRSRKYKTENKV) are Intravirion-facing.

The protein belongs to the orthopoxvirus OPG185 family. Heterodimerizes with OPG040. The heterodimer OPG185-OPG040 interacts with components of the entry fusion complex OPG143 and OPG094. Heterodimer with C3/VPC protein; disulfide-linked. Post-translationally, glycosylated; contains phosphate and sulfate-substituted glycans. O-glycosylation is required for hemagglutination and hemadsorption activities of infected cell membranes.

It localises to the virion membrane. Its subcellular location is the host membrane. Its function is as follows. Prevents cell to cell fusion by interacting with and directing the viral OPG040 protein on the host plasma membrane. The OPG185-OPG040 complex associates with components of the entry fusion complex (EFC) presumably to avoid superinfection and syncytium formation. Via its interaction with C3/VCP protein, protects the infected cell and probably also the extracellular enveloped virus from complement attack. This chain is Protein OPG185 (OPG185), found in Bos taurus (Bovine).